A 149-amino-acid polypeptide reads, in one-letter code: UPF0260 protein Pmen_1776 (149 aa).

The protein belongs to the UPF0260 family.

This chain is UPF0260 protein Pmen_1776, found in Ectopseudomonas mendocina (strain ymp) (Pseudomonas mendocina).